The primary structure comprises 803 residues: MINYYVYATDDSLSTNSDYYFNKNALQTLEQFQNEIENISSCDKVLYLHWSAYCRQKEIGDVKSRYLRRNGEGTDTRPSEFIKWIHKNINLLDGKLKLLYMVTDGQISKNEANVCKNLLNEKPFSFERIVFYAINNNTEQIDLSVASAFVNNSDCKIYRNDEMVEWVNLTKEFNYDIITTENFISKKDELLSFVRFKFINSMPTDANVLNEVDKLKRLRQRLFSEIKQTNNSSMNFDQIKNKNEFVNTFKSTEFYKTLYNADVLNFDKIIDSTISTAINYLHNRNKSYAFDVMKNLHYQNKLASVNAETDDVVANDDDEAYDYSNVENIRFPDCILANDSGVPAILLTHYNLFETIQGSLTKFKSRLEFPLLWSQNKEIKNSIEYCYNLESLKQLIQHGTRLSPRSRRPFTGAIVPNEQFDEYNDYVLACTYFDAKKVAFNAGLMYYLLYKHINDAEYIDDNVKDYFKRYVIYRINNTECMIGFSNLAMEPLIKVKLPTALWYVSEISTLLFKHDNQHFGKEKLRQFAHFAEDMLQILQWCDYTDVNVEAVKKRAYCLKRINMFKRMSVLDAVEWIANRAFECKDKFIINKLTNADALQDLKFLKVNHNGVVDEHVLNDTSINAERYLYFYHIIEDFDKYISVVDNTMRPAFVLEEGKTFYDSLLKQLQSVHFNGQEITFEKCSRLDFNRILSLHKLYIECVKSLNKYPTLEEYQNYVYNQKHVKFNRIAIFPENILQNLAAVHNEYANKIVNLPVEEFIVRANNTVNRITRIQNERVGSPLQAEEIDKLIKLSEQRVNICRK.

The sequence is that of Early 94 kDa protein from Lepidoptera (butterflies and moths).